Here is a 1221-residue protein sequence, read N- to C-terminus: DNA-directed RNA polymerase subunit beta' (1221 aa).

The Zn(2+) site is built by Cys-60, Cys-62, Cys-75, and Cys-78. Residues Asp-449, Asp-451, and Asp-453 each coordinate Mg(2+). 4 residues coordinate Zn(2+): Cys-821, Cys-896, Cys-903, and Cys-906.

Belongs to the RNA polymerase beta' chain family. The RNAP catalytic core consists of 2 alpha, 1 beta, 1 beta' and 1 omega subunit. When a sigma factor is associated with the core the holoenzyme is formed, which can initiate transcription. Mg(2+) serves as cofactor. It depends on Zn(2+) as a cofactor.

It carries out the reaction RNA(n) + a ribonucleoside 5'-triphosphate = RNA(n+1) + diphosphate. Functionally, DNA-dependent RNA polymerase catalyzes the transcription of DNA into RNA using the four ribonucleoside triphosphates as substrates. This is DNA-directed RNA polymerase subunit beta' from Lactobacillus delbrueckii subsp. bulgaricus (strain ATCC 11842 / DSM 20081 / BCRC 10696 / JCM 1002 / NBRC 13953 / NCIMB 11778 / NCTC 12712 / WDCM 00102 / Lb 14).